An 85-amino-acid chain; its full sequence is Arminin 524 (85 aa).

Positions 1 to 18 (MKAVFAILFLAFIALTYA) are cleaved as a signal peptide. A propeptide spanning residues 19–57 (KSYDEVKEEIKNEVEREIFEDLEEESDELDNDVEEFNDA) is cleaved from the precursor. An Alanine amide modification is found at A82.

Belongs to the arminin family. In terms of tissue distribution, expressed in entodermal epithelium along the body column.

The protein localises to the secreted. It localises to the target cell membrane. Antimicrobial peptide with a broad-spectrum antimicrobial activity. Keeps its antibacterial activity under a wide range of salt concentrations that mimic physiological conditions of human blood, which is surprising, since Hydra is an obligate freshwater animal with nearly no salt tolerance. Does not affect red blood cells. This Hydra oligactis (Brown hydra) protein is Arminin 524.